The sequence spans 332 residues: Mitotic spindle assembly checkpoint protein MAD2B (332 aa).

Positions 4 to 332 (EHFCDCIGEF…RTFTEQSITK (329 aa)) constitute an HORMA domain. Disordered stretches follow at residues 181–204 (KTQQ…NGFI) and 225–244 (KSNQ…GDKD). Residues 230-244 (NKKEDNDDNNNGDKD) are compositionally biased toward basic and acidic residues.

The protein belongs to the MAD2 family.

The protein resides in the nucleus. Its function is as follows. Adapter protein able to interact with different proteins and involved in different biological processes. The protein is Mitotic spindle assembly checkpoint protein MAD2B (mad2l2) of Dictyostelium discoideum (Social amoeba).